The following is a 367-amino-acid chain: uncharacterized protein (367 aa).

The protein resides in the mitochondrion. This is an uncharacterized protein from Paramecium tetraurelia.